The primary structure comprises 1205 residues: A disintegrin and metalloproteinase with thrombospondin motifs 3 (1205 aa).

The signal sequence occupies residues 1–20 (MVLLSLWLIAAALVEVRTSA). Positions 21–249 (DGQAGNEEMV…QLNETMRRRR (229 aa)) are excised as a propeptide. 4 N-linked (GlcNAc...) asparagine glycosylation sites follow: asparagine 83, asparagine 119, asparagine 242, and asparagine 345. Residues 256–460 (YNIEVLLGVD…HSYDCLLDDP (205 aa)) enclose the Peptidase M12B domain. Intrachain disulfides connect cysteine 333-cysteine 382, cysteine 376-cysteine 455, and cysteine 415-cysteine 441. Histidine 398 is a Zn(2+) binding site. Glutamate 399 is a catalytic residue. Histidine 402 and histidine 408 together coordinate Zn(2+). A Disintegrin domain is found at 470–550 (ELPGINYSMD…MWKNANQQKQ (81 aa)). Asparagine 475 carries an N-linked (GlcNAc...) asparagine glycan. Intrachain disulfides connect cysteine 482-cysteine 507, cysteine 493-cysteine 516, cysteine 502-cysteine 535, cysteine 529-cysteine 540, cysteine 563-cysteine 600, cysteine 567-cysteine 605, and cysteine 578-cysteine 590. Residues 551–606 (DGNWGSWTKFGSCSRTCGTGVRFRTRQCNNPMPINGGQDCPGVNFEYQLCNTEECQ) form the TSP type-1 1 domain. The interval 713-844 (RTVKGTFTRT…NSNNVIQEEL (132 aa)) is spacer. Asparagine 814 carries N-linked (GlcNAc...) asparagine glycosylation. TSP type-1 domains lie at 845–905 (DTFE…QECT), 906–965 (HPLW…NRVP), and 966–1014 (CPAQ…QLPP). N-linked (GlcNAc...) asparagine glycosylation occurs at asparagine 942. 3 disulfides stabilise this stretch: cysteine 978-cysteine 1010, cysteine 982-cysteine 1015, and cysteine 993-cysteine 999. The region spanning 1015 to 1054 (CNDEPCLGDKSIFCQMEVLARYCSIPGYNKLCCESCSKRS) is the PLAC domain. Residues 1174–1205 (DSIGASSQARTSKKDGKIIDNRRPTRSSTLER) form a disordered region. Residues 1185-1205 (SKKDGKIIDNRRPTRSSTLER) show a composition bias toward basic and acidic residues.

The cofactor is Zn(2+). Post-translationally, the precursor is cleaved by a furin endopeptidase. In terms of processing, glycosylated. Can be O-fucosylated by POFUT2 on a serine or a threonine residue found within the consensus sequence C1-X(2)-(S/T)-C2-G of the TSP type-1 repeat domains where C1 and C2 are the first and second cysteine residue of the repeat, respectively. Fucosylated repeats can then be further glycosylated by the addition of a beta-1,3-glucose residue by the glucosyltransferase, B3GALTL. Fucosylation mediates the efficient secretion of ADAMTS family members. Can also be C-glycosylated with one or two mannose molecules on tryptophan residues within the consensus sequence W-X-X-W of the TPRs, and N-glycosylated. These other glycosylations can also facilitate secretion. Found in cartilage and skin.

The protein localises to the secreted. Its subcellular location is the extracellular space. It localises to the extracellular matrix. Functionally, cleaves the propeptides of type II collagen prior to fibril assembly. Does not act on types I and III collagens. This is A disintegrin and metalloproteinase with thrombospondin motifs 3 (ADAMTS3) from Homo sapiens (Human).